We begin with the raw amino-acid sequence, 531 residues long: Peptide chain release factor 3 (531 aa).

The tr-type G domain occupies 10 to 278 (ARRRTFAIIS…DFVEHAPGPL (269 aa)). Residues 19 to 26 (SHPDAGKT), 87 to 91 (DTPGH), and 141 to 144 (NKLD) each bind GTP.

It belongs to the TRAFAC class translation factor GTPase superfamily. Classic translation factor GTPase family. PrfC subfamily.

The protein localises to the cytoplasm. Functionally, increases the formation of ribosomal termination complexes and stimulates activities of RF-1 and RF-2. It binds guanine nucleotides and has strong preference for UGA stop codons. It may interact directly with the ribosome. The stimulation of RF-1 and RF-2 is significantly reduced by GTP and GDP, but not by GMP. This Thioalkalivibrio sulfidiphilus (strain HL-EbGR7) protein is Peptide chain release factor 3.